The primary structure comprises 325 residues: Golgi to ER traffic protein 4 homolog A (325 aa).

Disordered regions lie at residues 1–22 (MAAA…GGVQ) and 306–325 (SGED…IELD). Residues 307–317 (GEDDDVEDGQE) are compositionally biased toward acidic residues.

The protein belongs to the GET4 family. In terms of assembly, component of the bag6/bat3 complex.

The protein localises to the cytoplasm. It is found in the cytosol. Its function is as follows. As part of a cytosolic protein quality control complex, the bag6/bat3 complex, maintains misfolded and hydrophobic patches-containing proteins in a soluble state and participates in their proper delivery to the endoplasmic reticulum or alternatively can promote their sorting to the proteasome where they undergo degradation. The bag6/bat3 complex is involved in the post-translational delivery of tail-anchored/type II transmembrane proteins to the endoplasmic reticulum membrane. Similarly, the bag6/bat3 complex also functions as a sorting platform for proteins of the secretory pathway that are mislocalized to the cytosol either delivering them to the proteasome for degradation or to the endoplasmic reticulum. The bag6/bat3 complex also plays a role in the endoplasmic reticulum-associated degradation (ERAD), a quality control mechanism that eliminates unwanted proteins of the endoplasmic reticulum through their retrotranslocation to the cytosol and their targeting to the proteasome. It maintains these retrotranslocated proteins in an unfolded yet soluble state condition in the cytosol to ensure their proper delivery to the proteasome. The polypeptide is Golgi to ER traffic protein 4 homolog A (get4-a) (Xenopus laevis (African clawed frog)).